Consider the following 124-residue polypeptide: uncharacterized protein (124 aa).

A signal peptide spans 1–18 (MHIIKTLISVGVAFSLSA). Cys-19 carries N-palmitoyl cysteine lipidation. Cys-19 carries S-diacylglycerol cysteine lipidation.

Its subcellular location is the cell membrane. This is an uncharacterized protein from Pasteurella multocida (strain Pm70).